A 92-amino-acid chain; its full sequence is MSGSFDRYVSFKNSNWEVRSERVMARLQKHIDAAENPFWAYFAQKRIELREKQGLDDLRVLHNYLPTLRELLEDNGDLETLAMLEELEVTLM.

It belongs to the CowN family.

In terms of biological role, is required to sustain N(2)-dependent growth in the presence of low levels of carbon monoxide (CO). Probably acts by protecting the N(2) fixation ability of the nitrogenase complex, which is inactivated in the presence of CO. In Rhodopseudomonas palustris (strain HaA2), this protein is N(2)-fixation sustaining protein CowN.